A 953-amino-acid chain; its full sequence is Zinc finger protein 507 (953 aa).

Ser-95 carries the phosphoserine modification. 3 C2H2-type zinc fingers span residues 125–147 (YQCSLCKFLSSSFSVLKDHIKQH), 155–185 (LMCSECHITSRSQEELEAHVVNDHDNDANIH), and 248–270 (YRCLFCSYTCGQQRMLKTHAWKH). Ser-427 bears the Phosphoserine mark. The tract at residues 470–489 (KGLATDENAPPGRRRTNSES) is disordered. 5 consecutive C2H2-type zinc fingers follow at residues 641 to 663 (YRCRLCHYTSGNKGYIKQHLRVH), 669 to 691 (YQCPICEHIADNSKDLESHMIHH), 697 to 720 (YQCKQCEESFHYKSQLRNHEREQH), 758 to 780 (YRCDVCDYTSTTYVGVRNHRRIH), and 786 to 808 (YRCSLCGYVCSHPPSLKSHMWKH). A disordered region spans residues 831–888 (GRVLGKSPGKTQLKSSEESADPVTGSSENAVSSSELMSQTPSEVLGTNENEKLSPTSN). The span at 854–888 (TGSSENAVSSSELMSQTPSEVLGTNENEKLSPTSN) shows a compositional bias: polar residues. The C2H2-type 9 zinc finger occupies 911-933 (FCCCICGFESTSKENLLDHMKEH).

This sequence belongs to the krueppel C2H2-type zinc-finger protein family.

It is found in the nucleus. Functionally, may be involved in transcriptional regulation. The polypeptide is Zinc finger protein 507 (ZNF507) (Homo sapiens (Human)).